The sequence spans 455 residues: Rhodopsin (455 aa).

Over 1–34 (MVESTTLVNQTWWYNPTVDIHPHWAKFDPIPDAV) the chain is Extracellular. Asn-9 carries N-linked (GlcNAc...) asparagine glycosylation. A helical membrane pass occupies residues 35 to 59 (YYSVGIFIGVVGIIGILGNGVVIYL). At 60 to 71 (FSKTKSLQTPAN) the chain is on the cytoplasmic side. The chain crosses the membrane as a helical span at residues 72–98 (MFIINLAMSDLSFSAINGFPLKTISAF). Over 99–110 (MKKWIFGKVACQ) the chain is Extracellular. Residues Cys-109 and Cys-187 are joined by a disulfide bond. Residues 111-132 (LYGLLGGIFGFMSINTMAMISI) form a helical membrane-spanning segment. The 'Ionic lock' involved in activated form stabilization motif lies at 133–135 (DRY). Residues 133–152 (DRYNVIGRPMAASKKMSHRR) are Cytoplasmic-facing. The chain crosses the membrane as a helical span at residues 153–173 (AFLMIIFVWMWSIVWSVGPVF). At 174-200 (NWGAYVPEGILTSCSFDYLSTDPSTRS) the chain is on the extracellular side. The chain crosses the membrane as a helical span at residues 201–225 (FILCMYFCGFMLPIIIIAFCYFNIV). Topologically, residues 226–262 (MSVSNHEKEMAAMAKRLNAKELRKAQAGASAEMKLAK) are cytoplasmic. The chain crosses the membrane as a helical span at residues 263–284 (ISMVIITQFMLSWSPYAIIALL). Over 285 to 294 (AQFGPAEWVT) the chain is Extracellular. The chain crosses the membrane as a helical span at residues 295-316 (PYAAELPVLFAKASAIHNPIVY). Residue Lys-306 is modified to N6-(retinylidene)lysine. Residues 317–455 (SVSHPKFREA…QGVDNQAYQA (139 aa)) are Cytoplasmic-facing. 2 S-palmitoyl cysteine lipidation sites follow: Cys-337 and Cys-338. Residues 378 to 387 (QKMQAQQAAY) show a composition bias toward low complexity. The disordered stretch occupies residues 378 to 455 (QKMQAQQAAY…QGVDNQAYQA (78 aa)). Positions 388 to 433 (QPPPPPQGYPPQGYPPQGAYPPPQGYPPQGYPPQGYPPQGYPPQGA) are enriched in pro residues. Repeat copies occupy residues 395 to 399 (GYPPQ), 400 to 404 (GYPPQ), 412 to 416 (GYPPQ), 417 to 421 (GYPPQ), 422 to 426 (GYPPQ), and 427 to 431 (GYPPQ). The segment at 395–431 (GYPPQGYPPQGAYPPPQGYPPQGYPPQGYPPQGYPPQ) is 6 X 5 AA repeats of G-Y-P-P-Q.

This sequence belongs to the G-protein coupled receptor 1 family. Opsin subfamily. Contains one covalently linked retinal chromophore. Upon light absorption, the covalently bound 11-cis-retinal is converted to all-trans-retinal. After hydrolysis of the Schiff base and release of the covalently bound all-trans-retinal, active rhodopsin is regenerated by binding of a fresh molecule of 11-cis-retinal.

Its subcellular location is the cell projection. It is found in the rhabdomere membrane. Functionally, photoreceptor required for image-forming vision at low light intensity. Light-induced isomerization of 11-cis to all-trans retinal triggers a conformational change that activates signaling via G-proteins. Signaling mediates the activation of phospholipase C. Subsequent receptor phosphorylation mediates displacement of the bound G-protein alpha subunit by arrestin and terminates signaling. This is Rhodopsin (RHO) from Enteroctopus dofleini (North Pacific giant octopus).